We begin with the raw amino-acid sequence, 388 residues long: Lipid-A-disaccharide synthase (388 aa).

It belongs to the LpxB family.

It catalyses the reaction a lipid X + a UDP-2-N,3-O-bis[(3R)-3-hydroxyacyl]-alpha-D-glucosamine = a lipid A disaccharide + UDP + H(+). It functions in the pathway bacterial outer membrane biogenesis; LPS lipid A biosynthesis. Functionally, condensation of UDP-2,3-diacylglucosamine and 2,3-diacylglucosamine-1-phosphate to form lipid A disaccharide, a precursor of lipid A, a phosphorylated glycolipid that anchors the lipopolysaccharide to the outer membrane of the cell. The protein is Lipid-A-disaccharide synthase of Burkholderia mallei (strain ATCC 23344).